Consider the following 268-residue polypeptide: Undecaprenyl-diphosphatase (268 aa).

Transmembrane regions (helical) follow at residues 5–25 (SIIS…IPVS), 43–63 (GNTF…LVYF), 84–104 (FSVL…HGFI), 106–126 (AVLF…GVIL), 184–204 (AAEF…TLDL), 213–233 (FDDI…GIVV), and 248–268 (PFAI…WLVG).

This sequence belongs to the UppP family.

The protein resides in the cell inner membrane. It carries out the reaction di-trans,octa-cis-undecaprenyl diphosphate + H2O = di-trans,octa-cis-undecaprenyl phosphate + phosphate + H(+). Functionally, catalyzes the dephosphorylation of undecaprenyl diphosphate (UPP). Confers resistance to bacitracin. In Sinorhizobium fredii (strain NBRC 101917 / NGR234), this protein is Undecaprenyl-diphosphatase.